Consider the following 670-residue polypeptide: Segment polarity protein dishevelled homolog DVL-1 (670 aa).

Positions 1–85 (MAETKIIYHM…RVVSWLVLAE (85 aa)) constitute a DIX domain. Positions 89–237 (SDAGSQGTDS…LRQADRASSF (149 aa)) are disordered. The span at 142-151 (SHRRERARRR) shows a compositional bias: basic residues. The segment covering 152–171 (NREEAARTNGHPRGDRRRDV) has biased composition (basic and acidic residues). Residues 176–192 (DSASTALSSELESSSFV) are compositionally biased toward low complexity. Ser194 is modified (phosphoserine). Low complexity predominate over residues 200–214 (TSRLSSSTEQSTSSR). The segment covering 215–228 (LIRKHKRRRRKQRL) has biased composition (basic residues). The PDZ domain maps to 251–323 (TVTLNMERHH…NDDAVRVLRE (73 aa)). The DEP domain maps to 400–474 (PDSGLEIRDR…SEQCYYVFGD (75 aa)). A disordered region spans residues 518-642 (PGPPPCFPPA…PGGPPVRELA (125 aa)). The segment covering 526-555 (PAYQDPGFSYGSGSTGSQQSEGSKSSGSTR) has biased composition (low complexity). The span at 600 to 611 (SRGSSPRSQASA) shows a compositional bias: polar residues.

This sequence belongs to the DSH family. Interacts with CXXC4. Interacts (via PDZ domain) with NXN. Interacts with BRD7 and INVS. Interacts (via PDZ domain) with VANGL1 and VANGL2 (via C-terminus). Interacts with ARRB1; the interaction is enhanced by phosphorylation of DVL1. Interacts with CYLD. Interacts (via PDZ domain) with RYK. Self-associates (via DIX domain) and forms higher homooligomers. Interacts (via PDZ domain) with DACT1 and FZD7, where DACT1 and FZD7 compete for the same binding site. Interacts (via DEP domain) with MUSK; the interaction is direct and mediates the formation a DVL1, MUSK and PAK1 ternary complex involved in AChR clustering. Interacts (via PDZ domain) with TMEM88. Interacts with DCDC2. Interacts with FOXK2. Interacts with PKD1 (via extracellular domain). Interacts (via PDZ domain) with CCDC88C/DAPLE; competes with CCDC88C for binding to frizzled receptor FZD7 and dissociates from CCDC88C following initiation of non-canonical Wnt signaling when CCDC88C displaces DVL1 from ligand-activated FZD7. In terms of processing, ubiquitinated; undergoes both 'Lys-48'-linked ubiquitination, leading to its subsequent degradation by the ubiquitin-proteasome pathway, and 'Lys-63'-linked ubiquitination. The interaction with INVS is required for ubiquitination. Deubiquitinated by CYLD, which acts on 'Lys-63'-linked ubiquitin chains.

The protein resides in the cell membrane. Its subcellular location is the cytoplasm. The protein localises to the cytosol. It localises to the cytoplasmic vesicle. Functionally, participates in Wnt signaling by binding to the cytoplasmic C-terminus of frizzled family members and transducing the Wnt signal to down-stream effectors. Plays a role both in canonical and non-canonical Wnt signaling. Plays a role in the signal transduction pathways mediated by multiple Wnt genes. Required for LEF1 activation upon WNT1 and WNT3A signaling. DVL1 and PAK1 form a ternary complex with MUSK which is important for MUSK-dependent regulation of AChR clustering during the formation of the neuromuscular junction (NMJ). This chain is Segment polarity protein dishevelled homolog DVL-1 (DVL1), found in Pan troglodytes (Chimpanzee).